Reading from the N-terminus, the 376-residue chain is Probable cysteine protease RDL3 (376 aa).

A signal peptide spans 1 to 27; the sequence is MAISFRTLALLTLSVLLISISLGVVTA. Positions 28-126 are cleaved as a propeptide — activation peptide; the sequence is TESQRNEGEV…ERYQYKEGDV (99 aa). N80 carries N-linked (GlcNAc...) asparagine glycosylation. 2 disulfides stabilise this stretch: C149-C192 and C183-C226. The active site involves C152. N-linked (GlcNAc...) asparagine glycosylation is present at N270. C283 and C336 are oxidised to a cystine. Active-site residues include H290 and N311. N349 carries an N-linked (GlcNAc...) asparagine glycan.

The protein belongs to the peptidase C1 family. As to expression, expressed in root hairs.

Probable thiol protease. The protein is Probable cysteine protease RDL3 of Arabidopsis thaliana (Mouse-ear cress).